A 171-amino-acid chain; its full sequence is Shikimate kinase (171 aa).

Residue Gly-14–Thr-19 coordinates ATP. A Mg(2+)-binding site is contributed by Ser-18. Asp-36, Arg-60, and Gly-82 together coordinate substrate. ATP is bound at residue Arg-120. Arg-139 contacts substrate. Gln-156 lines the ATP pocket.

It belongs to the shikimate kinase family. As to quaternary structure, monomer. Mg(2+) is required as a cofactor.

The protein localises to the cytoplasm. The enzyme catalyses shikimate + ATP = 3-phosphoshikimate + ADP + H(+). Its pathway is metabolic intermediate biosynthesis; chorismate biosynthesis; chorismate from D-erythrose 4-phosphate and phosphoenolpyruvate: step 5/7. Functionally, catalyzes the specific phosphorylation of the 3-hydroxyl group of shikimic acid using ATP as a cosubstrate. The protein is Shikimate kinase of Shewanella woodyi (strain ATCC 51908 / MS32).